The following is a 224-amino-acid chain: Cardosin-E (224 aa).

The region spanning 1-221 is the Peptidase A1 domain; that stretch reads DSGSAIVALT…DYGNLLVGFA (221 aa). Asp-35 is a catalytic residue. A disulfide bridge links Cys-125 with Cys-129. Asp-134 is a catalytic residue.

This sequence belongs to the peptidase A1 family. As to quaternary structure, heterodimer of a light chain and a heavy chain. An intermediate form is produced first, and undergoes proteolytic processing to remove the internal plant-specific insert (PSI) and the propeptide. In terms of processing, N-glycosylated. Pistils.

It localises to the microsome membrane. The protein localises to the protein storage vacuole. It is found in the secreted. The protein resides in the cell wall. Its subcellular location is the extracellular space. It localises to the extracellular matrix. Inhibited by pepstatin. Its function is as follows. Aspartic protease with a high preference for bonds between hydrophobic residues. The protein is Cardosin-E of Cynara cardunculus (Cardoon).